The sequence spans 1226 residues: Chromosome-associated kinesin KIF4 (1226 aa).

Residues 8 to 337 form the Kinesin motor domain; it reads PVRVALRCRP…LRYADRARKI (330 aa). 87-94 is an ATP binding site; sequence GQTGSGKT. The stretch at 351 to 1006 forms a coiled coil; sequence ELQRLKLQVQ…YKQKLALLHV (656 aa). The span at 494–505 shows a compositional bias: acidic residues; that stretch reads EAASFPVPEEDS. 3 disordered regions span residues 494–516, 722–741, and 1052–1078; these read EAAS…GFTT, QRQK…GMEG, and DLLS…KQSK. Residues 722–735 are compositionally biased toward basic and acidic residues; it reads QRQKEAMEKRKDSQ. A globular region spans residues 1007 to 1226; sequence ASGKKLHNIL…SGCSAITEDE (220 aa). Residues 1053–1064 are compositionally biased toward acidic residues; sequence LLSESESEEESD.

Belongs to the TRAFAC class myosin-kinesin ATPase superfamily. Kinesin family. Chromokinesin subfamily. The cofactor is [2Fe-2S] cluster. [4Fe-4S] cluster is required as a cofactor. As to expression, expressed in oocytes, eggs, testes and brain.

The protein resides in the nucleus. It localises to the chromosome. Its subcellular location is the cytoplasm. It is found in the cytoskeleton. In terms of biological role, iron-sulfur (Fe-S) cluster binding motor protein that has a role in chromosome segregation during mitosis. Required for mitotic chromosomal positioning and bipolar spindle stabilization. The sequence is that of Chromosome-associated kinesin KIF4 (kif4) from Xenopus laevis (African clawed frog).